Consider the following 501-residue polypeptide: Solute carrier family 2, facilitated glucose transporter member 5 (501 aa).

Methionine 1 is subject to N-acetylmethionine. Residues methionine 1–alanine 18 lie on the Cytoplasmic side of the membrane. The chain crosses the membrane as a helical span at residues leucine 19 to valine 39. Tyrosine 32 lines the D-fructose pocket. Over asparagine 40–threonine 68 the chain is Extracellular. The N-linked (GlcNAc...) asparagine glycan is linked to asparagine 51. The chain crosses the membrane as a helical span at residues leucine 69–proline 91. The Cytoplasmic segment spans residues leucine 92–arginine 98. The chain crosses the membrane as a helical span at residues lysine 99 to serine 119. At lysine 120–glutamate 126 the chain is on the extracellular side. Residues methionine 127–tyrosine 149 form a helical membrane-spanning segment. The Cytoplasmic portion of the chain corresponds to leucine 150–alanine 161. The chain crosses the membrane as a helical span at residues leucine 162 to leucine 182. D-fructose is bound at residue glutamine 167. Residues arginine 183 to tryptophan 192 are Extracellular-facing. A helical transmembrane segment spans residues proline 193–phenylalanine 213. The Cytoplasmic segment spans residues proline 214 to glutamine 277. The chain crosses the membrane as a helical span at residues valine 278–tyrosine 298. D-fructose contacts are provided by residues glutamine 288 and isoleucine 296–tyrosine 298. The Extracellular segment spans residues tyrosine 299 to aspartate 313. A helical transmembrane segment spans residues valine 314 to phenylalanine 334. Topologically, residues valine 335–arginine 342 are cytoplasmic. A helical transmembrane segment spans residues alanine 343 to leucine 363. At alanine 364 to tryptophan 371 the chain is on the extracellular side. Residues methionine 372 to isoleucine 394 form a helical membrane-spanning segment. Histidine 387 serves as a coordination point for D-fructose. At proline 395–tyrosine 412 the chain is on the cytoplasmic side. The helical transmembrane segment at methionine 413–isoleucine 433 threads the bilayer. A D-fructose-binding site is contributed by histidine 419–tryptophan 420. Topologically, residues glutamine 434 to alanine 439 are extracellular. The helical transmembrane segment at tyrosine 440 to valine 460 threads the bilayer. The Cytoplasmic portion of the chain corresponds to proline 461 to leucine 501.

The protein belongs to the major facilitator superfamily. Sugar transporter (TC 2.A.1.1) family. Glucose transporter subfamily.

The protein localises to the apical cell membrane. It localises to the cell membrane. It is found in the sarcolemma. The catalysed reaction is D-fructose(out) = D-fructose(in). Functions as a fructose transporter that has only low activity with other monosaccharides. Can mediate the uptake of deoxyglucose, but with low efficiency. Essential for fructose uptake in the small intestine. Plays a role in the regulation of salt uptake and blood pressure in response to dietary fructose. Required for the development of high blood pressure in response to high dietary fructose intake. The chain is Solute carrier family 2, facilitated glucose transporter member 5 from Equus caballus (Horse).